The following is a 131-amino-acid chain: Profilin-2 (131 aa).

A disulfide bridge links Cys13 with Cys115. The short motif at 81-97 (AVIRGKKGPGGVTVKKT) is the Involved in PIP2 interaction element. A Phosphothreonine modification is found at Thr111.

The protein belongs to the profilin family. Multimer. Occurs in many kinds of cells as a complex with monomeric actin in a 1:1 ratio. Post-translationally, phosphorylated by MAP kinases.

It is found in the cytoplasm. Its subcellular location is the cytoskeleton. Functionally, binds to actin and affects the structure of the cytoskeleton. At high concentrations, profilin prevents the polymerization of actin, whereas it enhances it at low concentrations. By binding to PIP2, it inhibits the formation of IP3 and DG. This Hevea brasiliensis (Para rubber tree) protein is Profilin-2.